The sequence spans 82 residues: Small ribosomal subunit protein eS17 (82 aa).

The protein belongs to the eukaryotic ribosomal protein eS17 family.

This Sulfolobus acidocaldarius (strain ATCC 33909 / DSM 639 / JCM 8929 / NBRC 15157 / NCIMB 11770) protein is Small ribosomal subunit protein eS17.